Consider the following 266-residue polypeptide: 4-diphosphocytidyl-2-C-methyl-D-erythritol kinase (266 aa).

Lys11 is an active-site residue. An ATP-binding site is contributed by 103–113; sequence PTFAGLGGGSS. Asp145 is a catalytic residue.

Belongs to the GHMP kinase family. IspE subfamily.

It carries out the reaction 4-CDP-2-C-methyl-D-erythritol + ATP = 4-CDP-2-C-methyl-D-erythritol 2-phosphate + ADP + H(+). It functions in the pathway isoprenoid biosynthesis; isopentenyl diphosphate biosynthesis via DXP pathway; isopentenyl diphosphate from 1-deoxy-D-xylulose 5-phosphate: step 3/6. Catalyzes the phosphorylation of the position 2 hydroxy group of 4-diphosphocytidyl-2C-methyl-D-erythritol. The polypeptide is 4-diphosphocytidyl-2-C-methyl-D-erythritol kinase (Sulfurimonas denitrificans (strain ATCC 33889 / DSM 1251) (Thiomicrospira denitrificans (strain ATCC 33889 / DSM 1251))).